A 245-amino-acid polypeptide reads, in one-letter code: MLAHPTLDKLNTMGLTGMAKAFSELISNGESEQLSHAEWLGLLLEREWSWRYDRKLAARLRFAKLRHQAVPEDVDYRSERGLDRALFMKLIGGDWIDAHDNLAICGPSGVGKSWLACALGHKACRDDRSVLYQRVPRLFANLALARGDGRYARLQRTLGHVQLLILDDWGLEPLNEQARHDLLEILEDRYGRRSTIITSQLPVSAWHEIIGNPTYADAILDRLVHNAHRIDLSGESLRRNQRRKS.

Residue 106–113 coordinates ATP; that stretch reads GPSGVGKS.

This sequence belongs to the IS21/IS1162 putative ATP-binding protein family.

The polypeptide is Putative insertion sequence ATP-binding protein y4pL (Sinorhizobium fredii (strain NBRC 101917 / NGR234)).